The following is a 164-amino-acid chain: Small ribosomal subunit protein uS5 (164 aa).

Residues 10–73 (LEERVVAINR…EAAKKNLIEV (64 aa)) form the S5 DRBM domain.

This sequence belongs to the universal ribosomal protein uS5 family. As to quaternary structure, part of the 30S ribosomal subunit. Contacts proteins S4 and S8.

Its function is as follows. With S4 and S12 plays an important role in translational accuracy. Functionally, located at the back of the 30S subunit body where it stabilizes the conformation of the head with respect to the body. The sequence is that of Small ribosomal subunit protein uS5 from Streptococcus thermophilus (strain CNRZ 1066).